A 120-amino-acid chain; its full sequence is Ig heavy chain V region AC38 15.3 (120 aa).

The segment at 1–98 (QVQLLQPGTE…EDSAVYYCAR (98 aa)) is v segment. Cysteines 22 and 96 form a disulfide. The d segment stretch occupies residues 99–105 (WDYEGDR). The interval 106 to 120 (YFDVWGTGTTVTVSS) is j segment.

The chain is Ig heavy chain V region AC38 15.3 from Mus musculus (Mouse).